The sequence spans 339 residues: DNA-directed RNA polymerase subunit alpha (339 aa).

The alpha N-terminal domain (alpha-NTD) stretch occupies residues 1–233 (MVREEVAGST…DLFLPFLHAE (233 aa)). The segment at 264 to 339 (KKGIPLNCIF…IDLLKNKLSF (76 aa)) is alpha C-terminal domain (alpha-CTD).

The protein belongs to the RNA polymerase alpha chain family. In plastids the minimal PEP RNA polymerase catalytic core is composed of four subunits: alpha, beta, beta', and beta''. When a (nuclear-encoded) sigma factor is associated with the core the holoenzyme is formed, which can initiate transcription.

It localises to the plastid. The protein resides in the chloroplast. It catalyses the reaction RNA(n) + a ribonucleoside 5'-triphosphate = RNA(n+1) + diphosphate. In terms of biological role, DNA-dependent RNA polymerase catalyzes the transcription of DNA into RNA using the four ribonucleoside triphosphates as substrates. The polypeptide is DNA-directed RNA polymerase subunit alpha (Thinopyrum bessarabicum (Wheatgrass)).